The sequence spans 86 residues: Small ribosomal subunit protein bS18 (86 aa).

It belongs to the bacterial ribosomal protein bS18 family. As to quaternary structure, part of the 30S ribosomal subunit. Forms a tight heterodimer with protein bS6.

In terms of biological role, binds as a heterodimer with protein bS6 to the central domain of the 16S rRNA, where it helps stabilize the platform of the 30S subunit. The protein is Small ribosomal subunit protein bS18 of Campylobacter concisus (strain 13826).